The sequence spans 414 residues: ORC1-type DNA replication protein 1 (414 aa).

ATP-binding positions include 70–74, Tyr-213, and Arg-225; that span reads TGKTA.

Belongs to the CDC6/cdc18 family.

Functionally, involved in regulation of DNA replication. The chain is ORC1-type DNA replication protein 1 (cdc6-1) from Methanosarcina acetivorans (strain ATCC 35395 / DSM 2834 / JCM 12185 / C2A).